A 70-amino-acid polypeptide reads, in one-letter code: Large ribosomal subunit protein bL31 (70 aa).

Cys-16, Cys-18, Cys-37, and Cys-40 together coordinate Zn(2+).

This sequence belongs to the bacterial ribosomal protein bL31 family. Type A subfamily. As to quaternary structure, part of the 50S ribosomal subunit. Zn(2+) serves as cofactor.

In terms of biological role, binds the 23S rRNA. The chain is Large ribosomal subunit protein bL31 from Ectopseudomonas mendocina (strain ymp) (Pseudomonas mendocina).